A 606-amino-acid chain; its full sequence is KH domain-containing protein At4g18375 (606 aa).

The segment covering 1 to 10 (MVERKKRKQI) has biased composition (basic residues). Positions 1 to 26 (MVERKKRKQIQRNNSESNRNQKRRIS) are disordered. 5 consecutive KH domains span residues 35 to 99 (LVVY…IGFT), 138 to 210 (NKEC…LFAV), 311 to 380 (ELVF…VEAV), 394 to 455 (NVKM…LIQI), and 535 to 599 (SSAL…ENLV).

The protein localises to the nucleus. This Arabidopsis thaliana (Mouse-ear cress) protein is KH domain-containing protein At4g18375.